A 367-amino-acid chain; its full sequence is Probable 7-methylxanthine methyltransferase 2 (367 aa).

Residue Y20 coordinates S-adenosyl-L-homocysteine. T27 provides a ligand contact to theobromine. The S-adenosyl-L-homocysteine site is built by C64, Q69, D101, L102, S134, and F135. Residues Y152, H155, and W156 each contribute to the theobromine site. Residues N172, D258, F260, and N261 each contribute to the Mg(2+) site. F313 is a theobromine binding site.

The protein belongs to the methyltransferase superfamily. Type-7 methyltransferase family. Mg(2+) serves as cofactor.

The enzyme catalyses 7-methylxanthine + S-adenosyl-L-methionine = theobromine + S-adenosyl-L-homocysteine + H(+). It participates in alkaloid biosynthesis. Involved in the biosynthesis of theobromine. The sequence is that of Probable 7-methylxanthine methyltransferase 2 from Theobroma cacao (Cacao).